Reading from the N-terminus, the 352-residue chain is Protein RecA (352 aa).

Residue 68–75 participates in ATP binding; the sequence is GPESSGKT.

The protein belongs to the RecA family.

The protein localises to the cytoplasm. In terms of biological role, can catalyze the hydrolysis of ATP in the presence of single-stranded DNA, the ATP-dependent uptake of single-stranded DNA by duplex DNA, and the ATP-dependent hybridization of homologous single-stranded DNAs. It interacts with LexA causing its activation and leading to its autocatalytic cleavage. The chain is Protein RecA from Clostridium perfringens (strain SM101 / Type A).